The chain runs to 82 residues: RNA-binding protein Hfq (82 aa).

The Sm domain occupies 10-70 (DTFLNHVRKN…ISTIMPAQPV (61 aa)).

This sequence belongs to the Hfq family. In terms of assembly, homohexamer.

In terms of biological role, RNA chaperone that binds small regulatory RNA (sRNAs) and mRNAs to facilitate mRNA translational regulation in response to envelope stress, environmental stress and changes in metabolite concentrations. Also binds with high specificity to tRNAs. This Parvibaculum lavamentivorans (strain DS-1 / DSM 13023 / NCIMB 13966) protein is RNA-binding protein Hfq.